The primary structure comprises 303 residues: Endo-1,3;1,4-beta-D-glucanase (303 aa).

Positions 1–43 (MPSSAQVLLCLAAVLAAAAATTAEAHSQCLDNPPDRSIHGRQL) are cleaved as a signal peptide. 3 N-linked (GlcNAc...) asparagine glycosylation sites follow: asparagine 115, asparagine 197, and asparagine 257.

Post-translationally, glycosylated.

Its subcellular location is the secreted. In terms of biological role, plays a role in control of plant growth. Mediates specific degradation of cell wall (1,3)(1,4)-beta-D-glucans and is related to auxin-mediated growth and development of cereal coleoptiles. The sequence is that of Endo-1,3;1,4-beta-D-glucanase from Zea mays (Maize).